A 1058-amino-acid chain; its full sequence is Carbamoyl phosphate synthase large chain (1058 aa).

Residues 1–401 (MAKRTDIKKI…CLLKACRSLE (401 aa)) are carboxyphosphate synthetic domain. Residues arginine 129, arginine 169, glycine 175, glycine 176, arginine 208, isoleucine 210, glutamate 215, glycine 241, isoleucine 242, histidine 243, glutamine 284, and glutamate 298 each coordinate ATP. Residues 133–327 (KQLMKELGEP…IAKIAAKIAV (195 aa)) enclose the ATP-grasp 1 domain. Glutamine 284, glutamate 298, and asparagine 300 together coordinate Mg(2+). Residues glutamine 284, glutamate 298, and asparagine 300 each contribute to the Mn(2+) site. An oligomerization domain region spans residues 402–546 (IGVHHNELKG…YSTYEWENES (145 aa)). Residues 547–929 (IKSEKESVIV…ALYKAFEASY (383 aa)) are carbamoyl phosphate synthetic domain. An ATP-grasp 2 domain is found at 671 to 861 (EKALKELGIP…MAQVATKLIL (191 aa)). Residues arginine 707, serine 746, isoleucine 748, glutamate 752, glycine 777, valine 778, histidine 779, serine 780, glutamine 820, and glutamate 832 each contribute to the ATP site. Glutamine 820, glutamate 832, and asparagine 834 together coordinate Mg(2+). Positions 820, 832, and 834 each coordinate Mn(2+). Residues 930 to 1058 (LHMPEYGTIV…ESRTFSIEAI (129 aa)) form the MGS-like domain. The allosteric domain stretch occupies residues 930–1058 (LHMPEYGTIV…ESRTFSIEAI (129 aa)).

This sequence belongs to the CarB family. Composed of two chains; the small (or glutamine) chain promotes the hydrolysis of glutamine to ammonia, which is used by the large (or ammonia) chain to synthesize carbamoyl phosphate. Tetramer of heterodimers (alpha,beta)4. Requires Mg(2+) as cofactor. It depends on Mn(2+) as a cofactor.

The enzyme catalyses hydrogencarbonate + L-glutamine + 2 ATP + H2O = carbamoyl phosphate + L-glutamate + 2 ADP + phosphate + 2 H(+). The catalysed reaction is hydrogencarbonate + NH4(+) + 2 ATP = carbamoyl phosphate + 2 ADP + phosphate + 2 H(+). It functions in the pathway amino-acid biosynthesis; L-arginine biosynthesis; carbamoyl phosphate from bicarbonate: step 1/1. The protein operates within pyrimidine metabolism; UMP biosynthesis via de novo pathway; (S)-dihydroorotate from bicarbonate: step 1/3. In terms of biological role, large subunit of the glutamine-dependent carbamoyl phosphate synthetase (CPSase). CPSase catalyzes the formation of carbamoyl phosphate from the ammonia moiety of glutamine, carbonate, and phosphate donated by ATP, constituting the first step of 2 biosynthetic pathways, one leading to arginine and/or urea and the other to pyrimidine nucleotides. The large subunit (synthetase) binds the substrates ammonia (free or transferred from glutamine from the small subunit), hydrogencarbonate and ATP and carries out an ATP-coupled ligase reaction, activating hydrogencarbonate by forming carboxy phosphate which reacts with ammonia to form carbamoyl phosphate. The sequence is that of Carbamoyl phosphate synthase large chain from Streptococcus equi subsp. equi (strain 4047).